Reading from the N-terminus, the 53-residue chain is uncharacterized protein (53 aa).

The helical transmembrane segment at 24-44 (LMTFIAVNAVLSLILIRAVIL) threads the bilayer.

Its subcellular location is the membrane. This is an uncharacterized protein from Methanocaldococcus jannaschii (strain ATCC 43067 / DSM 2661 / JAL-1 / JCM 10045 / NBRC 100440) (Methanococcus jannaschii).